The chain runs to 123 residues: Large ribosomal subunit protein bL17 (123 aa).

The protein belongs to the bacterial ribosomal protein bL17 family. Part of the 50S ribosomal subunit. Contacts protein L32.

This Staphylococcus haemolyticus (strain JCSC1435) protein is Large ribosomal subunit protein bL17.